The chain runs to 481 residues: Phospho-2-dehydro-3-deoxyheptonate aldolase (481 aa).

Residues 1-22 (MSQQTTPNAPGWAPDSWRSKPI) form a disordered region.

It belongs to the class-II DAHP synthase family. In terms of assembly, homodimer. Post-translationally, the N-terminus is blocked.

It carries out the reaction D-erythrose 4-phosphate + phosphoenolpyruvate + H2O = 7-phospho-2-dehydro-3-deoxy-D-arabino-heptonate + phosphate. It functions in the pathway metabolic intermediate biosynthesis; chorismate biosynthesis; chorismate from D-erythrose 4-phosphate and phosphoenolpyruvate: step 1/7. This Neurospora crassa (strain ATCC 24698 / 74-OR23-1A / CBS 708.71 / DSM 1257 / FGSC 987) protein is Phospho-2-dehydro-3-deoxyheptonate aldolase (aro-8).